We begin with the raw amino-acid sequence, 88 residues long: UPF0335 protein M446_5200 (88 aa).

It belongs to the UPF0335 family.

In Methylobacterium sp. (strain 4-46), this protein is UPF0335 protein M446_5200.